A 125-amino-acid chain; its full sequence is Small ribosomal subunit protein uS13 (125 aa).

Residues 92–125 (RHRRGLPVRGQRTRTNARTRKGKKKTVGAQAKKK) form a disordered region.

Belongs to the universal ribosomal protein uS13 family. In terms of assembly, part of the 30S ribosomal subunit. Forms a loose heterodimer with protein S19. Forms two bridges to the 50S subunit in the 70S ribosome.

In terms of biological role, located at the top of the head of the 30S subunit, it contacts several helices of the 16S rRNA. In the 70S ribosome it contacts the 23S rRNA (bridge B1a) and protein L5 of the 50S subunit (bridge B1b), connecting the 2 subunits; these bridges are implicated in subunit movement. Contacts the tRNAs in the A and P-sites. This is Small ribosomal subunit protein uS13 from Akkermansia muciniphila (strain ATCC BAA-835 / DSM 22959 / JCM 33894 / BCRC 81048 / CCUG 64013 / CIP 107961 / Muc).